The sequence spans 710 residues: Polyribonucleotide nucleotidyltransferase (710 aa).

Mg(2+) is bound by residues Asp-487 and Asp-493. The region spanning Pro-554–Ile-613 is the KH domain. The S1 motif domain maps to Gly-623–Lys-691.

It belongs to the polyribonucleotide nucleotidyltransferase family. Mg(2+) is required as a cofactor.

Its subcellular location is the cytoplasm. It catalyses the reaction RNA(n+1) + phosphate = RNA(n) + a ribonucleoside 5'-diphosphate. Functionally, involved in mRNA degradation. Catalyzes the phosphorolysis of single-stranded polyribonucleotides processively in the 3'- to 5'-direction. The chain is Polyribonucleotide nucleotidyltransferase from Rhizobium rhizogenes (strain K84 / ATCC BAA-868) (Agrobacterium radiobacter).